The primary structure comprises 169 residues: Ribosome maturation factor RimP (169 aa).

The protein belongs to the RimP family.

It is found in the cytoplasm. Required for maturation of 30S ribosomal subunits. This Koribacter versatilis (strain Ellin345) protein is Ribosome maturation factor RimP.